A 281-amino-acid polypeptide reads, in one-letter code: Nucleotide-binding protein TRQ2_1124 (281 aa).

9-16 contacts ATP; it reads GLSGAGKT. 58–61 contacts GTP; sequence DVRS.

This sequence belongs to the RapZ-like family.

In terms of biological role, displays ATPase and GTPase activities. The polypeptide is Nucleotide-binding protein TRQ2_1124 (Thermotoga sp. (strain RQ2)).